A 62-amino-acid polypeptide reads, in one-letter code: U-stichotoxin-Hau1a (62 aa).

The first 21 residues, 1–21 (MKPAIFLMLFVAMFLISEGEG), serve as a signal peptide directing secretion. Residues 22 to 31 (FKPKDAPQER) constitute a propeptide that is removed on maturation. P36 carries the post-translational modification Hydroxyproline. 2 disulfides stabilise this stretch: C41–C53 and C44–C59.

This sequence belongs to the Hau1a/HC18/HC19 family.

Its subcellular location is the secreted. The protein resides in the nematocyst. Functionally, toxin that is lethal to crab. Does not produce the typical symptoms associated with sodium channel toxins in crabs, suggesting that it likely does not act on sodium channels. This is U-stichotoxin-Hau1a from Heteractis aurora (Banded sea anemone).